Here is a 378-residue protein sequence, read N- to C-terminus: Erythronate-4-phosphate dehydrogenase (378 aa).

Positions 45 and 66 each coordinate substrate. D146 and T175 together coordinate NAD(+). R208 is an active-site residue. Position 232 (D232) interacts with NAD(+). The active site involves E237. Residue H254 is the Proton donor of the active site. Residue G257 participates in NAD(+) binding. Y258 contacts substrate.

This sequence belongs to the D-isomer specific 2-hydroxyacid dehydrogenase family. PdxB subfamily. As to quaternary structure, homodimer.

The protein resides in the cytoplasm. It catalyses the reaction 4-phospho-D-erythronate + NAD(+) = (R)-3-hydroxy-2-oxo-4-phosphooxybutanoate + NADH + H(+). It functions in the pathway cofactor biosynthesis; pyridoxine 5'-phosphate biosynthesis; pyridoxine 5'-phosphate from D-erythrose 4-phosphate: step 2/5. Catalyzes the oxidation of erythronate-4-phosphate to 3-hydroxy-2-oxo-4-phosphonooxybutanoate. The protein is Erythronate-4-phosphate dehydrogenase of Shigella dysenteriae serotype 1 (strain Sd197).